Consider the following 412-residue polypeptide: Multidrug resistance protein MdtG (412 aa).

11 helical membrane-spanning segments follow: residues Leu19–Val39, Leu56–Ala76, Leu90–Leu110, Ala113–Ile133, Thr144–Ala164, Thr171–Ile191, Leu222–Leu242, Ile254–Pro274, Ile288–Thr308, Phe317–Asn337, and Ala376–Leu396.

It belongs to the major facilitator superfamily. DHA1 family. MdtG (TC 2.A.1.2.20) subfamily.

It is found in the cell inner membrane. The protein is Multidrug resistance protein MdtG of Klebsiella pneumoniae (strain 342).